Consider the following 116-residue polypeptide: Immunoglobulin heavy variable 2-4 (116 aa).

Residues 1–19 (MAVLVLLFCLVTFPSCVLS) form the signal peptide. An Ig-like domain is found at 20 to 116 (QVQLKQSGPG…DDTAIYYCAK (97 aa)). Cys41 and Cys114 form a disulfide bridge.

The chain is Immunoglobulin heavy variable 2-4 from Mus musculus (Mouse).